Here is a 965-residue protein sequence, read N- to C-terminus: UvrABC system protein A (965 aa).

Residue 32-39 participates in ATP binding; that stretch reads GLSGSGKS. The C4-type zinc finger occupies 254–281; it reads CPVCDYSLPELEPRLFSFNAPMGACPAC. 2 consecutive ABC transporter domains span residues 311–588 and 608–937; these read WDRR…PRSL and PNAT…HFLA. 641 to 648 lines the ATP pocket; it reads GVSGSGKS. The C4-type zinc-finger motif lies at 740–766; sequence CEACEGDGLIKVEMHFLPDVYVPCDIC.

Belongs to the ABC transporter superfamily. UvrA family. Forms a heterotetramer with UvrB during the search for lesions.

The protein localises to the cytoplasm. Its function is as follows. The UvrABC repair system catalyzes the recognition and processing of DNA lesions. UvrA is an ATPase and a DNA-binding protein. A damage recognition complex composed of 2 UvrA and 2 UvrB subunits scans DNA for abnormalities. When the presence of a lesion has been verified by UvrB, the UvrA molecules dissociate. This Xylella fastidiosa (strain Temecula1 / ATCC 700964) protein is UvrABC system protein A.